The following is a 124-amino-acid chain: MARVAGIDLPKNKRIDVALEYIYGIGKRNAKDVIAKANGQIDPTTRVKDLTEAQANLLNTILQKEYKVEGELRREISGNIQRYVDTGSYRGNRHRKRLPVRGQRTKTNSRTRKGKRRTVGSKTK.

Positions 87–124 (GSYRGNRHRKRLPVRGQRTKTNSRTRKGKRRTVGSKTK) are disordered. Residues 91 to 124 (GNRHRKRLPVRGQRTKTNSRTRKGKRRTVGSKTK) show a composition bias toward basic residues.

Belongs to the universal ribosomal protein uS13 family. As to quaternary structure, part of the 30S ribosomal subunit. Forms a loose heterodimer with protein S19. Forms two bridges to the 50S subunit in the 70S ribosome.

Functionally, located at the top of the head of the 30S subunit, it contacts several helices of the 16S rRNA. In the 70S ribosome it contacts the 23S rRNA (bridge B1a) and protein L5 of the 50S subunit (bridge B1b), connecting the 2 subunits; these bridges are implicated in subunit movement. Contacts the tRNAs in the A and P-sites. This chain is Small ribosomal subunit protein uS13, found in Elusimicrobium minutum (strain Pei191).